We begin with the raw amino-acid sequence, 297 residues long: Non-homologous end-joining factor 1 (297 aa).

Residues 1-131 (MDARLLQLPW…ATVSTVCRHL (131 aa)) are globular head. The C-terminal tail stretch occupies residues 220–286 (PKAPTHPKEE…LTHRPPAGAS (67 aa)). Positions 222-297 (APTHPKEEDT…PKKKAKGLFM (76 aa)) are disordered. A compositionally biased stretch (polar residues) spans 232 to 255 (GNSASHRPMAESSSISFEKTVPTQ). The span at 263 to 286 (VSEPSQVPQSSVSCLTHRPPAGAS) shows a compositional bias: low complexity. An XLM motif is present at residues 287–297 (KPKKKAKGLFM). The segment covering 287-297 (KPKKKAKGLFM) has biased composition (basic residues).

Belongs to the XRCC4-XLF family. XLF subfamily. As to quaternary structure, homodimer. Interacts with xrcc4; the interaction is direct and is mediated via a head-to-head interaction between N-terminal head regions. Component of the core long-range non-homologous end joining (NHEJ) complex (also named DNA-PK complex) composed of prkdc/DNA-PKcs, lig4, xrcc4, xrcc6/Ku70, xrcc5/Ku80 and nhej1/xlf.

It is found in the nucleus. Functionally, DNA repair protein involved in DNA non-homologous end joining (NHEJ); required for double-strand break (DSB) repair and V(D)J recombination. It is also involved in telomere maintenance. Plays a key role in NHEJ by promoting the ligation of various mismatched and non-cohesive ends. In some studies, has been shown to associate with xrcc4 to form alternating helical filaments that bridge DNA and act like a bandage, holding together the broken DNA until it is repaired. Alternatively, it has also been shown that rather than forming filaments, a single nhej1 dimer interacts through both head domains with xrcc4 to promote the close alignment of DNA ends. The xrcc4-nhej1/xlf subcomplex binds to the DNA fragments of a DSB in a highly diffusive manner and robustly bridges two independent DNA molecules, holding the broken DNA fragments in close proximity to one other. The mobility of the bridges ensures that the ends remain accessible for further processing by other repair factors. In Xenopus laevis (African clawed frog), this protein is Non-homologous end-joining factor 1.